A 363-amino-acid chain; its full sequence is MAAARPTVSIYNKDGSVSSETLALPFVFKAPIRPDLVRSVHTAVAKNKRQPYAVSEKAGHQTSAESWGTGRALARIPRVGGGGTHRSGQAAFGNMCRSGRMFAPTKTWRKWHVKVNQNEKRYAIASAVAASGVPSLLLARGHRIEEIPEVPLVVDDAVQSFQKTKEAVALLKEIKAYRDVIKVANSRKLRAGKGKLRNRRHVQRRGPLVVFNEDTGIVKAFRNIPGVEIVNVRRLNLLQLAPGGHLGRFVIWTKSAFGLLDSVFGSTTEVAQLKKNYFLPENIISNADVTRLINSDEIQSIVKAAGPSRVKRAHVQKKNPLKNKAVLSRLNPYAKAYKANVKINSEKTPKAAGEKFLSVLHEN.

Positions 280–363 are C-terminal-extended nuclear localization signal; it reads PENIISNADV…EKFLSVLHEN (84 aa).

The protein belongs to the universal ribosomal protein uL4 family. Component of the large ribosomal subunit (LSU). Mature yeast ribosomes consist of a small (40S) and a large (60S) subunit. The 40S small subunit contains 1 molecule of ribosomal RNA (18S rRNA) and at least 33 different proteins. The large 60S subunit contains 3 rRNA molecules (25S, 5.8S and 5S rRNA) and at least 46 different proteins. uL4 is associated with the polypeptide exit tunnel. uL4 interacts with its chaperone ACL4 and the nuclear import receptor KAP104.

It is found in the cytoplasm. Its function is as follows. Component of the ribosome, a large ribonucleoprotein complex responsible for the synthesis of proteins in the cell. The small ribosomal subunit (SSU) binds messenger RNAs (mRNAs) and translates the encoded message by selecting cognate aminoacyl-transfer RNA (tRNA) molecules. The large subunit (LSU) contains the ribosomal catalytic site termed the peptidyl transferase center (PTC), which catalyzes the formation of peptide bonds, thereby polymerizing the amino acids delivered by tRNAs into a polypeptide chain. The nascent polypeptides leave the ribosome through a tunnel in the LSU and interact with protein factors that function in enzymatic processing, targeting, and the membrane insertion of nascent chains at the exit of the ribosomal tunnel. This Schizosaccharomyces pombe (strain 972 / ATCC 24843) (Fission yeast) protein is Large ribosomal subunit protein uL4B (rpl401).